Here is a 247-residue protein sequence, read N- to C-terminus: MAVLEVCCYSVACAREAERCGADRIELCAAPQEGGLTPSYGVLVSAREAITLPVHPIVRPRGGDFCYTEEEFAAMLNDIRMVRDLGFPGLVTGVLDADGQVDIPRMKKIMAAAGPLAVTFHRAFDLCADPRQAWKTLGTLGVKRILTSGQQSSAEKGISLITELIAAGDTPIIMAGAGVRAANLPLFLQAGVKEVHSSAGHWLPSEMRFRHPGVSMSADPDADEYRRYAVNGAAVAEMKRIISAWRS.

This sequence belongs to the CutC family.

Its subcellular location is the cytoplasm. This is PF03932 family protein CutC from Klebsiella pneumoniae subsp. pneumoniae (strain ATCC 700721 / MGH 78578).